We begin with the raw amino-acid sequence, 447 residues long: Kynurenine 3-monooxygenase (447 aa).

Belongs to the aromatic-ring hydroxylase family. KMO subfamily. It depends on FAD as a cofactor.

It catalyses the reaction L-kynurenine + NADPH + O2 + H(+) = 3-hydroxy-L-kynurenine + NADP(+) + H2O. It functions in the pathway cofactor biosynthesis; NAD(+) biosynthesis; quinolinate from L-kynurenine: step 1/3. Functionally, catalyzes the hydroxylation of L-kynurenine (L-Kyn) to form 3-hydroxy-L-kynurenine (L-3OHKyn). Required for synthesis of quinolinic acid. In Christiangramia forsetii (strain DSM 17595 / CGMCC 1.15422 / KT0803) (Gramella forsetii), this protein is Kynurenine 3-monooxygenase.